The following is a 131-amino-acid chain: Small ribosomal subunit protein bS16 (131 aa).

Over residues 87–117 the composition is skewed to basic and acidic residues; that stretch reads IGKSKQEELRKSEAKTSAKNKKANEEKANEE. The disordered stretch occupies residues 87 to 131; the sequence is IGKSKQEELRKSEAKTSAKNKKANEEKANEEKVEESETLEASSEA.

Belongs to the bacterial ribosomal protein bS16 family.

This Prochlorococcus marinus (strain SARG / CCMP1375 / SS120) protein is Small ribosomal subunit protein bS16.